The chain runs to 541 residues: MIWHVQNENFILDSTRIFMKAFHLLLFDGSLIFPECILIFGLILLLMIDSSSDQKDIPWLYFIPSTSLVMSITALLFRWREEPMISFSGNFQTNNFNEIFQFLILLCSTLCIPLSVEYIECTEMAITEFLLFVLTATLGGMFLCGANDFITIFVAPECFSLCSYLLSGYTKKDVRSNEATMKYLLMGGASSSILVHGFSWLYGSSGGEIELQEIVNGLINTQMYNSPGISIALIFITVGIGFKLSPAPSHQWTPDVYEGVRFVREIPTSLSISEMFGFFKTPWTCRREILSPTPVVAFLSVTSKVAASASATRIFDIPFYFSSNGWHLLLEILAILSMILGNLIAITQTSMKRMLAYSSIGQIGYVIIGIIVGDSNDGYASMITYMLFYISMNLGTFACIVLFGLRTGTDNIRDYAGLYTKDPFLALSLALCLLSLGGLPPLAGFFGKLYLFWCGWQAGLYFLVLIGLLTSVVSIYYYLKIIKLLMTGRNQEITPHVRNYRRSPLRSNNSIELSMIVCVIASTIPGISMNPIIAIAQDSLF.

14 helical membrane passes run 24-44, 57-77, 99-119, 124-144, 149-169, 183-203, 227-247, 289-309, 326-346, 354-374, 385-405, 426-446, 449-469, and 515-535; these read LLLF…GLIL, IPWL…ALLF, IFQF…VEYI, MAIT…MFLC, FITI…LSGY, YLLM…WLYG, PGIS…LSPA, ILSP…AASA, WHLL…LIAI, MLAY…IVGD, YMLF…LFGL, ALSL…AGFF, LYLF…IGLL, and MIVC…IIAI.

Belongs to the complex I subunit 2 family. NDH is composed of at least 16 different subunits, 5 of which are encoded in the nucleus.

The protein localises to the plastid. It localises to the chloroplast thylakoid membrane. The catalysed reaction is a plastoquinone + NADH + (n+1) H(+)(in) = a plastoquinol + NAD(+) + n H(+)(out). The enzyme catalyses a plastoquinone + NADPH + (n+1) H(+)(in) = a plastoquinol + NADP(+) + n H(+)(out). In terms of biological role, NDH shuttles electrons from NAD(P)H:plastoquinone, via FMN and iron-sulfur (Fe-S) centers, to quinones in the photosynthetic chain and possibly in a chloroplast respiratory chain. The immediate electron acceptor for the enzyme in this species is believed to be plastoquinone. Couples the redox reaction to proton translocation, and thus conserves the redox energy in a proton gradient. In Coffea arabica (Arabian coffee), this protein is NAD(P)H-quinone oxidoreductase subunit 2 A, chloroplastic.